The sequence spans 272 residues: Small ribosomal subunit protein uS2 (272 aa).

The segment covering 224 to 233 (EGKKAREERQ) has biased composition (basic and acidic residues). Residues 224-272 (EGKKAREERQLAAAKDAAGDAKPEAEEAPAAAEAEEAPAAEAEEAPAAE) are disordered. A compositionally biased stretch (acidic residues) spans 256–272 (EAEEAPAAEAEEAPAAE).

This sequence belongs to the universal ribosomal protein uS2 family.

The chain is Small ribosomal subunit protein uS2 from Corynebacterium glutamicum (strain ATCC 13032 / DSM 20300 / JCM 1318 / BCRC 11384 / CCUG 27702 / LMG 3730 / NBRC 12168 / NCIMB 10025 / NRRL B-2784 / 534).